Consider the following 148-residue polypeptide: Large-conductance mechanosensitive channel (148 aa).

The next 2 helical transmembrane spans lie at 9 to 29 (AFAVKGNVVDMAVGIIIGAAF) and 79 to 99 (IQTVIDFIIVAFAIFMGVKAI).

Belongs to the MscL family. In terms of assembly, homopentamer.

Its subcellular location is the cell inner membrane. In terms of biological role, channel that opens in response to stretch forces in the membrane lipid bilayer. May participate in the regulation of osmotic pressure changes within the cell. This Pseudomonas syringae pv. tomato (strain ATCC BAA-871 / DC3000) protein is Large-conductance mechanosensitive channel.